Reading from the N-terminus, the 337-residue chain is Calcium-binding protein 39-like (337 aa).

The protein belongs to the Mo25 family. Component of a trimeric complex composed of STK11/LKB1, STRAD (STRADA or STRADB) and CAB39/MO25 (CAB39/MO25alpha or CAB39L/MO25beta): the complex tethers STK11/LKB1 in the cytoplasm and stimulates its catalytic activity.

Functionally, component of a complex that binds and activates STK11/LKB1. In the complex, required to stabilize the interaction between CAB39/MO25 (CAB39/MO25alpha or CAB39L/MO25beta) and STK11/LKB1. The chain is Calcium-binding protein 39-like (CAB39L) from Homo sapiens (Human).